Reading from the N-terminus, the 243-residue chain is Probable aquaporin SIP1-2 (243 aa).

Helical transmembrane passes span 12–32 (VITF…AAIV) and 42–62 (WAPL…FTVI). An NPA 1 motif is present at residues 72–74 (NPC). The next 3 helical transmembrane spans lie at 90 to 110 (FSLA…AITI), 135 to 155 (GAIS…LIIL), and 162 to 182 (LAKT…GSKF). An NPA 2 motif is present at residues 188–190 (NPA). A helical membrane pass occupies residues 210–230 (VYWISSYTGAILSAMLFRIIF).

Belongs to the MIP/aquaporin (TC 1.A.8) family. SIP (TC 1.A.8.10) subfamily. Expressed in roots and above ground. Expressed in elongating regions of the root tips, cotyledons, minor veins and hydathode cells of the rosette leaves. Weakly expressed in vascular tissues of the flower petals, filaments of stamens, upper part of the styles and receptacles of the siliques.

Its subcellular location is the endoplasmic reticulum membrane. In terms of biological role, water channel required to facilitate the transport of water across cell membrane. The polypeptide is Probable aquaporin SIP1-2 (SIP1-2) (Arabidopsis thaliana (Mouse-ear cress)).